The primary structure comprises 525 residues: GMP synthase [glutamine-hydrolyzing] (525 aa).

In terms of domain architecture, Glutamine amidotransferase type-1 spans 16-205 (PVLVVDFGAQ…LHDFAGIGAR (190 aa)). Catalysis depends on C93, which acts as the Nucleophile. Catalysis depends on residues H179 and E181. The region spanning 206-399 (WTPANIANAL…LGLPEEIVAR (194 aa)) is the GMPS ATP-PPase domain. 233-239 (SGGVDSA) contacts ATP.

As to quaternary structure, homodimer.

The catalysed reaction is XMP + L-glutamine + ATP + H2O = GMP + L-glutamate + AMP + diphosphate + 2 H(+). It participates in purine metabolism; GMP biosynthesis; GMP from XMP (L-Gln route): step 1/1. Its function is as follows. Catalyzes the synthesis of GMP from XMP. This is GMP synthase [glutamine-hydrolyzing] from Mycobacterium marinum (strain ATCC BAA-535 / M).